A 147-amino-acid chain; its full sequence is Putative pre-16S rRNA nuclease (147 aa).

This sequence belongs to the YqgF nuclease family.

It localises to the cytoplasm. Functionally, could be a nuclease involved in processing of the 5'-end of pre-16S rRNA. The protein is Putative pre-16S rRNA nuclease of Polynucleobacter necessarius subsp. necessarius (strain STIR1).